The chain runs to 123 residues: Small ribosomal subunit protein uS13 (123 aa).

The segment at 97–123 (PVRGQRTHTNAKTRKGRSKLPVAAKKK) is disordered.

The protein belongs to the universal ribosomal protein uS13 family. In terms of assembly, part of the 30S ribosomal subunit. Forms a loose heterodimer with protein S19. Forms two bridges to the 50S subunit in the 70S ribosome.

Located at the top of the head of the 30S subunit, it contacts several helices of the 16S rRNA. In the 70S ribosome it contacts the 23S rRNA (bridge B1a) and protein L5 of the 50S subunit (bridge B1b), connecting the 2 subunits; these bridges are implicated in subunit movement. Contacts the tRNAs in the A and P-sites. In Ehrlichia canis (strain Jake), this protein is Small ribosomal subunit protein uS13.